The following is a 355-amino-acid chain: Peptide chain release factor 1 (355 aa).

At Gln-231 the chain carries N5-methylglutamine. The segment covering 280–291 has biased composition (basic and acidic residues); the sequence is SERLAKESEARK. A disordered region spans residues 280-303; sequence SERLAKESEARKSQVGSGDRSERI.

It belongs to the prokaryotic/mitochondrial release factor family. Post-translationally, methylated by PrmC. Methylation increases the termination efficiency of RF1.

The protein resides in the cytoplasm. Peptide chain release factor 1 directs the termination of translation in response to the peptide chain termination codons UAG and UAA. This chain is Peptide chain release factor 1, found in Campylobacter jejuni (strain RM1221).